A 185-amino-acid polypeptide reads, in one-letter code: Threonylcarbamoyl-AMP synthase (185 aa).

The 183-residue stretch at 3 to 185 folds into the YrdC-like domain; sequence EQAPDEVQEI…VDAISGKVLR (183 aa).

The protein belongs to the SUA5 family. TsaC subfamily.

The protein localises to the cytoplasm. It carries out the reaction L-threonine + hydrogencarbonate + ATP = L-threonylcarbamoyladenylate + diphosphate + H2O. Its function is as follows. Required for the formation of a threonylcarbamoyl group on adenosine at position 37 (t(6)A37) in tRNAs that read codons beginning with adenine. Catalyzes the conversion of L-threonine, HCO(3)(-)/CO(2) and ATP to give threonylcarbamoyl-AMP (TC-AMP) as the acyladenylate intermediate, with the release of diphosphate. The chain is Threonylcarbamoyl-AMP synthase from Shewanella sediminis (strain HAW-EB3).